A 247-amino-acid polypeptide reads, in one-letter code: Carboxy-S-adenosyl-L-methionine synthase (247 aa).

S-adenosyl-L-methionine contacts are provided by residues Y40, 65 to 67 (GAS), 90 to 91 (DN), 122 to 123 (DI), N137, and R204.

The protein belongs to the class I-like SAM-binding methyltransferase superfamily. Cx-SAM synthase family. Homodimer.

It catalyses the reaction prephenate + S-adenosyl-L-methionine = carboxy-S-adenosyl-L-methionine + 3-phenylpyruvate + H2O. In terms of biological role, catalyzes the conversion of S-adenosyl-L-methionine (SAM) to carboxy-S-adenosyl-L-methionine (Cx-SAM). This chain is Carboxy-S-adenosyl-L-methionine synthase, found in Pseudomonas putida (strain ATCC 47054 / DSM 6125 / CFBP 8728 / NCIMB 11950 / KT2440).